The chain runs to 146 residues: ATP synthase epsilon chain (146 aa).

Residues Ser103–Arg122 form a disordered region.

The protein belongs to the ATPase epsilon chain family. In terms of assembly, F-type ATPases have 2 components, CF(1) - the catalytic core - and CF(0) - the membrane proton channel. CF(1) has five subunits: alpha(3), beta(3), gamma(1), delta(1), epsilon(1). CF(0) has three main subunits: a, b and c.

The protein resides in the cell membrane. Functionally, produces ATP from ADP in the presence of a proton gradient across the membrane. This Lactobacillus johnsonii (strain CNCM I-12250 / La1 / NCC 533) protein is ATP synthase epsilon chain.